A 290-amino-acid polypeptide reads, in one-letter code: GTPase Era (290 aa).

Positions 2 to 167 (KSGFVSIVGR…LDELVKYLPE (166 aa)) constitute an Era-type G domain. The G1 stretch occupies residues 10-17 (GRTNAGKS). 10–17 (GRTNAGKS) contacts GTP. The G2 stretch occupies residues 36–40 (NATRR). The segment at 57-60 (DTPG) is G3. GTP-binding positions include 57-61 (DTPGL) and 116-119 (NKVD). Residues 116-119 (NKVD) form a G4 region. The interval 146 to 148 (YSI) is G5. The KH type-2 domain occupies 194–274 (IYENLSDEIP…MLKLFVQLEK (81 aa)).

The protein belongs to the TRAFAC class TrmE-Era-EngA-EngB-Septin-like GTPase superfamily. Era GTPase family. Monomer.

The protein resides in the cytoplasm. The protein localises to the cell inner membrane. Functionally, an essential GTPase that binds both GDP and GTP, with rapid nucleotide exchange. Plays a role in 16S rRNA processing and 30S ribosomal subunit biogenesis and possibly also in cell cycle regulation and energy metabolism. The sequence is that of GTPase Era from Campylobacter lari (strain RM2100 / D67 / ATCC BAA-1060).